We begin with the raw amino-acid sequence, 135 residues long: C-type lectin APL (135 aa).

Disulfide bonds link cysteine 3–cysteine 14, cysteine 31–cysteine 131, cysteine 38–cysteine 133, and cysteine 106–cysteine 123. Residues 10-132 enclose the C-type lectin domain; it reads MNGLCYKIFD…CESKNAFLCQ (123 aa). The Ca(2+) site is built by glutamine 96, aspartate 98, glutamate 104, asparagine 119, and aspartate 120. The short motif at 96 to 98 is the Galactose-binding element; it reads QPD.

It belongs to the true venom lectin family. As to quaternary structure, homodimer; disulfide-linked. Expressed by the venom gland.

The protein localises to the secreted. Functionally, beta-galactoside lectin that agglutinates rabbit and human erythrocytes in a calcium-dependent fashion (MHC is 0.21 ug/ml on rabbit erythrocytes). Galactose (15 mM), lactose (20 mM), rhamnose (20 mM) and EGTA strongly inhibit this activity. This chain is C-type lectin APL, found in Agkistrodon piscivorus piscivorus (Eastern cottonmouth).